A 275-amino-acid polypeptide reads, in one-letter code: uncharacterized protein (275 aa).

3 consecutive transmembrane segments (helical) span residues 15 to 35 (LFLP…FLGS), 39 to 59 (AIMI…FGLF), and 70 to 90 (ILYL…VVYL). The disordered stretch occupies residues 140–191 (SSKTDMDSQVAEAPQTEEGEPSVNQVPQEAGASHRVGPYQDQGLATDRNGNP).

The protein resides in the mitochondrion membrane. This is an uncharacterized protein from Arabidopsis thaliana (Mouse-ear cress).